Reading from the N-terminus, the 329-residue chain is UDP-3-O-acylglucosamine N-acyltransferase (329 aa).

The Proton acceptor role is filled by H224.

It belongs to the transferase hexapeptide repeat family. LpxD subfamily. In terms of assembly, homotrimer.

It catalyses the reaction a UDP-3-O-[(3R)-3-hydroxyacyl]-alpha-D-glucosamine + a (3R)-hydroxyacyl-[ACP] = a UDP-2-N,3-O-bis[(3R)-3-hydroxyacyl]-alpha-D-glucosamine + holo-[ACP] + H(+). The protein operates within bacterial outer membrane biogenesis; LPS lipid A biosynthesis. Its function is as follows. Catalyzes the N-acylation of UDP-3-O-acylglucosamine using 3-hydroxyacyl-ACP as the acyl donor. Is involved in the biosynthesis of lipid A, a phosphorylated glycolipid that anchors the lipopolysaccharide to the outer membrane of the cell. In Albidiferax ferrireducens (strain ATCC BAA-621 / DSM 15236 / T118) (Rhodoferax ferrireducens), this protein is UDP-3-O-acylglucosamine N-acyltransferase.